The primary structure comprises 169 residues: Peptide deformylase (169 aa).

Fe cation contacts are provided by cysteine 94 and histidine 136. Glutamate 137 is a catalytic residue. Histidine 140 lines the Fe cation pocket.

Belongs to the polypeptide deformylase family. It depends on Fe(2+) as a cofactor.

The enzyme catalyses N-terminal N-formyl-L-methionyl-[peptide] + H2O = N-terminal L-methionyl-[peptide] + formate. Its function is as follows. Removes the formyl group from the N-terminal Met of newly synthesized proteins. Requires at least a dipeptide for an efficient rate of reaction. N-terminal L-methionine is a prerequisite for activity but the enzyme has broad specificity at other positions. The sequence is that of Peptide deformylase from Phenylobacterium zucineum (strain HLK1).